We begin with the raw amino-acid sequence, 241 residues long: Tetraspanin-1 (241 aa).

Over 1 to 11 the chain is Cytoplasmic; sequence MQCFSFIKTMM. A helical transmembrane segment spans residues 12–32; it reads ILFNLLIFLCGAALLAVGIWV. Residues 33-52 are Extracellular-facing; sequence SIDGASFLKIFGPLSSSAMQ. A helical membrane pass occupies residues 53–73; it reads FVNVGYFLIAAGVVVFALGFL. The Cytoplasmic portion of the chain corresponds to 74-88; the sequence is GCYGAKTESKCALVT. Residues 89 to 109 form a helical membrane-spanning segment; that stretch reads FFFILLLIFIAEVAAAVVALV. Residues 110 to 211 are Extracellular-facing; it reads YTTMAEHFLT…NQLLYDIRTN (102 aa). N-linked (GlcNAc...) asparagine glycans are attached at residues N141, N154, N178, and N184. Residues 212-232 form a helical membrane-spanning segment; that stretch reads AVTVGGVAAGIGGLELAAMIV. Residues 233 to 241 are Cytoplasmic-facing; it reads SMYLYCNLQ.

The protein belongs to the tetraspanin (TM4SF) family. As to quaternary structure, interacts with SLC19A2. Interacts with NTRK1/TRKA.

The protein localises to the cell membrane. It localises to the lysosome membrane. In terms of biological role, structural component of specialized membrane microdomains known as tetraspanin-enriched microdomains (TERMs), which act as platforms for receptor clustering and signaling. Participates thereby in diverse biological functions such as cell signal transduction, adhesion, migration and protein trafficking. Regulates neuronal differentiation in response to NGF by facilitating NGF-mediated activation of NTRK1/TRKA receptor tyrosine kinase and subsequent downstream signaling pathways. Plays a role in the inhibition of TNFalpha-induced apoptosis. Mechanistically, inhibits the NF-kappa-B signaling pathway by blocking phosphorylation of CHUK. Also promotes the stability of the thiamine transporter 1/SLC19A2 in intestinal epithelial cells leading to an increase of thiamine uptake process. The sequence is that of Tetraspanin-1 (TSPAN1) from Homo sapiens (Human).